The chain runs to 485 residues: MKFIVKLFPEIMIKSETVRKRFAKILTSNIRNILQKYDEETAVVRHWDYIEVRSKNEENREELIALLQRIPGIHHFLEVEEKPFTDLHHIFELTLADVAQQLQGKTFCVRVKRKGKHKFSSIEAERYIGGGLNQHIESAKVRLKNPDVTVRIDIEDDKMMLVKARHAGIGGYPIGTQEDVLSLISGGFDSGVSSYMLIRRGSRVHYCFFNLGGVAHEIGVKQMAYHIWQRYSASHKVRFIAINFEGVVGEILEKVDNGQMGVVLKRMMVRAASKVAQRFNIEAIVTGEALGQVSSQTLTNLRLIDEAADALVLRPLITHDKEQIIAMAKEIGTDDIAKSMPEFCGVISKNPTIKAVREKIVTEEGYFNFEILESAVQNAKYLDIRQIAEETEKEVVEVEAISVLSENEVILDIRSPEETDENPFKSDTHEVIQMPFYKLSSQFGSLDQSKNYVLYCERGVMSKLQALYLKENGFSNVRVFAKKIH.

The 105-residue stretch at 61 to 165 (EELIALLQRI…DDKMMLVKAR (105 aa)) folds into the THUMP domain. ATP contacts are provided by residues 183–184 (LI), Lys265, Gly287, and Gln296. A disulfide bridge connects residues Cys344 and Cys456. The region spanning 404-483 (LSENEVILDI…FSNVRVFAKK (80 aa)) is the Rhodanese domain. The Cysteine persulfide intermediate role is filled by Cys456.

This sequence belongs to the ThiI family.

Its subcellular location is the cytoplasm. The enzyme catalyses [ThiI sulfur-carrier protein]-S-sulfanyl-L-cysteine + a uridine in tRNA + 2 reduced [2Fe-2S]-[ferredoxin] + ATP + H(+) = [ThiI sulfur-carrier protein]-L-cysteine + a 4-thiouridine in tRNA + 2 oxidized [2Fe-2S]-[ferredoxin] + AMP + diphosphate. It catalyses the reaction [ThiS sulfur-carrier protein]-C-terminal Gly-Gly-AMP + S-sulfanyl-L-cysteinyl-[cysteine desulfurase] + AH2 = [ThiS sulfur-carrier protein]-C-terminal-Gly-aminoethanethioate + L-cysteinyl-[cysteine desulfurase] + A + AMP + 2 H(+). Its pathway is cofactor biosynthesis; thiamine diphosphate biosynthesis. Functionally, catalyzes the ATP-dependent transfer of a sulfur to tRNA to produce 4-thiouridine in position 8 of tRNAs, which functions as a near-UV photosensor. Also catalyzes the transfer of sulfur to the sulfur carrier protein ThiS, forming ThiS-thiocarboxylate. This is a step in the synthesis of thiazole, in the thiamine biosynthesis pathway. The sulfur is donated as persulfide by IscS. The sequence is that of tRNA sulfurtransferase from Haemophilus influenzae (strain PittEE).